The primary structure comprises 875 residues: Lysine-specific demethylase 7A (875 aa).

The PHD-type zinc-finger motif lies at 5-56; the sequence is PLYCVCRQPYDVNRFMIECDICKDWFHGSCVQVVEHHAADIDVYHCPNCEPI. The JmjC domain maps to 197-353; the sequence is FSDTRMSNLV…MQLRCYEMER (157 aa). Thr-246 provides a ligand contact to substrate. 2 residues coordinate Fe cation: His-249 and Asp-251. Lys-266 contacts substrate. His-321 is a Fe cation binding site. Disordered stretches follow at residues 442-506, 629-710, and 742-820; these read EDDS…SRKL, SQGE…NTDC, and QGNG…ATAK. Over residues 448-462 the composition is skewed to polar residues; the sequence is AVKTQGSAECSLSRS. Positions 478-505 are enriched in basic residues; sequence QDHHHHRRRHHHHHHHHHHHHHHHHSRK. Positions 650 to 663 are enriched in basic and acidic residues; that stretch reads SDSKAGDSAEKCSL. Positions 688–697 are enriched in basic residues; the sequence is SHRHSHHKQA. The span at 742–762 shows a compositional bias: low complexity; it reads QGNGSSTSSSSDMWDSSEPCS.

This sequence belongs to the JHDM1 histone demethylase family. JHDM1D subfamily. The cofactor is Fe(2+). In terms of tissue distribution, predominantly expressed in brain.

The protein localises to the nucleus. Functionally, histone demethylase required for brain development. Specifically demethylates dimethylated 'Lys-9' and 'Lys-27' (H3K9me2 and H3K27me2, respectively) of histone H3 and monomethylated histone H4 'Lys-20' residue (H4K20Me1), thereby playing a central role in histone code. The polypeptide is Lysine-specific demethylase 7A (kdm7a) (Danio rerio (Zebrafish)).